Here is a 223-residue protein sequence, read N- to C-terminus: Ribonuclease T (223 aa).

The Exonuclease domain maps to 20-194; that stretch reads VVIDVETAGF…YDTNQTALLF (175 aa). Mg(2+) is bound by residues Asp23, Glu25, His181, and Asp186. Catalysis depends on His181, which acts as the Proton donor/acceptor.

This sequence belongs to the RNase T family. Homodimer. Mg(2+) is required as a cofactor.

In terms of biological role, trims short 3' overhangs of a variety of RNA species, leaving a one or two nucleotide 3' overhang. Responsible for the end-turnover of tRNA: specifically removes the terminal AMP residue from uncharged tRNA (tRNA-C-C-A). Also appears to be involved in tRNA biosynthesis. This Pectobacterium atrosepticum (strain SCRI 1043 / ATCC BAA-672) (Erwinia carotovora subsp. atroseptica) protein is Ribonuclease T.